The following is a 437-amino-acid chain: Enolase (437 aa).

Gln162 contacts (2R)-2-phosphoglycerate. Residue Glu204 is the Proton donor of the active site. 3 residues coordinate Mg(2+): Asp251, Glu297, and Asp324. (2R)-2-phosphoglycerate-binding residues include Lys349, Arg378, Ser379, and Lys400. Residue Lys349 is the Proton acceptor of the active site.

The protein belongs to the enolase family. It depends on Mg(2+) as a cofactor.

The protein resides in the cytoplasm. It is found in the secreted. Its subcellular location is the cell surface. It catalyses the reaction (2R)-2-phosphoglycerate = phosphoenolpyruvate + H2O. It functions in the pathway carbohydrate degradation; glycolysis; pyruvate from D-glyceraldehyde 3-phosphate: step 4/5. Catalyzes the reversible conversion of 2-phosphoglycerate (2-PG) into phosphoenolpyruvate (PEP). It is essential for the degradation of carbohydrates via glycolysis. In Chlorobium phaeobacteroides (strain DSM 266 / SMG 266 / 2430), this protein is Enolase.